The primary structure comprises 286 residues: Protein Bride of doubletime (286 aa).

Interacts with dco (via nuclear localization signal). Interacts with Ankrd49; interaction promotes the stability of both complex members.

The protein resides in the cytoplasm. Its subcellular location is the cytosol. The protein localises to the cell membrane. Functionally, functions in planar polarity establishment and circadian rhythms by promoting the activity and localization of dco/dbt. Required for regulating the levels of dco/dbt and per in the nuclei of photoreceptor cells and thereby is involved in normal oscillations of the circadian clock proteins in the eye. In the dark, the cry circadian and rhodopsin visual pathways, activate the accumulation of the protein into Arr1- and Arr2-dependent cytosolic foci which are required for dco localization to photoreceptor nuclei. It is possible that the accumulation into foci results in the dissociation of the protein from dco, thus allowing dco to interact with importins and microtubles for nuclear transport. By promoting nuclei localization and kinase activity of dco towards per, it is essential for regulating normal cycles of per nuclear accumulation in brain circadian neurons and thus is important for normal circadian behavior. Essential for regulating the establishment of planar cell polarity in the wing. Forms a complex with Ankrd49 which likely functions in the regulation of planar polarity by promoting the activity of dco during planar polarity establishment. Within the complex, directly promotes dco activity in regulating phosphorylation and asymmetric localization of core planar polarity proteins such as dsh. In Drosophila melanogaster (Fruit fly), this protein is Protein Bride of doubletime.